The chain runs to 292 residues: AKT-interacting protein homolog B (292 aa).

The interval 1-44 is disordered; that stretch reads MNPFWNMPSASVRKRSDNDEKIATADQKISPARSSSAKKQLPSI. Positions 14–23 are enriched in basic and acidic residues; the sequence is KRSDNDEKIA. The region spanning 75 to 223 is the UBC core domain; that stretch reads YLEYSLLAEF…VVDSVKLCNS (149 aa).

Belongs to the ubiquitin-conjugating enzyme family. FTS subfamily.

The protein resides in the cytoplasm. Its subcellular location is the cell membrane. May function to promote vesicle trafficking and/or fusion. May also regulate apoptosis. In Xenopus laevis (African clawed frog), this protein is AKT-interacting protein homolog B (aktip-b).